The following is a 434-amino-acid chain: NFATC2-interacting protein (434 aa).

2 disordered regions span residues 1–63 (MGSP…TPAL) and 176–237 (GSED…RAYN). A compositionally biased stretch (pro residues) spans 28–59 (GPQPCPKPRGPQPCPKPRGPQPCPKPRGPQPC). The segment covering 228-237 (PVRRKGRAYN) has biased composition (basic residues). A Ubiquitin-like domain is found at 275 to 351 (PELTVKVRRG…IDCVVLSPPD (77 aa)).

It is found in the nucleus. The protein localises to the cytoplasm. Functionally, regulates the magnitude of NFAT-driven transcription of a specific subset of cytokine genes. The sequence is that of NFATC2-interacting protein (nfatc2ip) from Xenopus tropicalis (Western clawed frog).